The sequence spans 66 residues: Cold shock protein 1 (66 aa).

In terms of domain architecture, CSD spans 4-63 (GTVKWFNADKGYGFITGEDGNDVFVHFSAIQTDGFKTLEEGQKVTFDEESSDRGPQAANV). The interval 47–66 (VTFDEESSDRGPQAANVVPQ) is disordered.

Its subcellular location is the cytoplasm. The sequence is that of Cold shock protein 1 (csp) from Lactiplantibacillus plantarum (strain ATCC BAA-793 / NCIMB 8826 / WCFS1) (Lactobacillus plantarum).